The chain runs to 236 residues: Small ribosomal subunit protein uS3 (236 aa).

Residues 39–107 (IRSYVLEELR…ETSLNIVEIR (69 aa)) enclose the KH type-2 domain. A disordered region spans residues 214–236 (ASERRATEADQSGSSSNRRRENA).

This sequence belongs to the universal ribosomal protein uS3 family. In terms of assembly, part of the 30S ribosomal subunit. Forms a tight complex with proteins S10 and S14.

Its function is as follows. Binds the lower part of the 30S subunit head. Binds mRNA in the 70S ribosome, positioning it for translation. This Bartonella tribocorum (strain CIP 105476 / IBS 506) protein is Small ribosomal subunit protein uS3.